The chain runs to 443 residues: Tol-Pal system protein TolB (443 aa).

Residues 1 to 33 (MKIGIINTKIRTVFSAFACMIAASLVCTMPARA) form the signal peptide.

This sequence belongs to the TolB family. In terms of assembly, the Tol-Pal system is composed of five core proteins: the inner membrane proteins TolA, TolQ and TolR, the periplasmic protein TolB and the outer membrane protein Pal. They form a network linking the inner and outer membranes and the peptidoglycan layer.

It is found in the periplasm. In terms of biological role, part of the Tol-Pal system, which plays a role in outer membrane invagination during cell division and is important for maintaining outer membrane integrity. In Brucella anthropi (strain ATCC 49188 / DSM 6882 / CCUG 24695 / JCM 21032 / LMG 3331 / NBRC 15819 / NCTC 12168 / Alc 37) (Ochrobactrum anthropi), this protein is Tol-Pal system protein TolB.